We begin with the raw amino-acid sequence, 586 residues long: MALEIHMSDPMCLIENFNEQLKVNQEALEILSAITQPVVVVAIVGLYRTGKSYLMNKLAGKNKGFSVASTVQSHTKGIWIWCVPHPNWPNHTLVLLDTEGLGDVEKADNKNDIQIFALALLLSSTFVYNTVNKIDQGAIDLLHNVTELTDLLKARNSPDLDRVEDPADSASFFPDLVWTLRDFCLGLEIDGQLVTPDEYLENSLRPKQGSDQRVQNFNLPRLCIQKFFPKKKCFIFDLPAHQKKLAQLETLPDDELEPEFVQQVTEFCSYIFSHSMTKTLPGGIMVNGSRLKNLVLTYVNAISSGDLPCIENAVLALAQRENSAAVQKAIAHYDQQMGQKVQLPMETLQELLDLHRTSEREAIEVFMKNSFKDVDQSFQKELETLLDAKQNDICKRNLEASSDYCSALLKDIFGPLEEAVKQGIYSKPGGHNLFIQKTEELKAKYYREPRKGIQAEEVLQKYLKSKESVSHAILQTDQALTETEKKKKEAQVKAEAEKAEAQRLAAIQRQNEQMMQERERLHQEQVRQMEIAKQNWLAEQQKMQEQQMQEQAAQLSTTFQAQNRSLLSELQHAQRTVNNDDPCVLL.

The tract at residues 1 to 306 (MALEIHMSDP…TYVNAISSGD (306 aa)) is NLRP3-binding. The GTPase domain (Globular) stretch occupies residues 1 to 309 (MALEIHMSDP…NAISSGDLPC (309 aa)). The region spanning 35-276 (TQPVVVVAIV…FCSYIFSHSM (242 aa)) is the GB1/RHD3-type G domain. Residues 45–52 (GLYRTGKS), 67–69 (VAS), 181–182 (RD), and Leu-245 contribute to the GTP site. Residues 529-586 (MEIAKQNWLAEQQKMQEQQMQEQAAQLSTTFQAQNRSLLSELQHAQRTVNNDDPCVLL) form a required for tetramerization, but not for dimerization region. A Cysteine methyl ester modification is found at Cys-583. Cys-583 carries S-geranylgeranyl cysteine lipidation. A propeptide spans 584–586 (VLL) (removed in mature form).

The protein belongs to the TRAFAC class dynamin-like GTPase superfamily. GB1/RHD3 GTPase family. GB1 subfamily. In terms of assembly, homodimer; homodimerizes upon GTP-binding, forming a close face-to-face dimer. Heterodimer with other family members, including GBP1, GBP2, GBP3 and GBP4. May also form tetramers (dimer of dimers) in the presence of GTP. Interacts with NLRP3, possibly in its tetrameric form, and promotes PYCARD/ASC polymerization. Homodimer; homodimerizes upon GTP-binding. GDP-bound form remains homodimeric. As to quaternary structure, homodimer; homodimerizes upon GTP-binding. GDP-bound is monomeric. Isoprenylation is required for proper subcellular location. Expressed in peripheral blood monocytes (at protein level).

It localises to the cytoplasmic vesicle membrane. The protein localises to the golgi apparatus membrane. Its subcellular location is the cytoplasm. The catalysed reaction is GTP + H2O = GDP + phosphate + H(+). Its function is as follows. Interferon (IFN)-inducible GTPase that plays important roles in innate immunity against a diverse range of bacterial, viral and protozoan pathogens. Hydrolyzes GTP, but in contrast to other family members, does not produce GMP. Following infection, recruited to the pathogen-containing vacuoles or vacuole-escaped bacteria and acts as a positive regulator of inflammasome assembly by promoting the release of inflammasome ligands from bacteria. Acts by promoting lysis of pathogen-containing vacuoles, releasing pathogens into the cytosol. Following pathogen release in the cytosol, promotes recruitment of proteins that mediate bacterial cytolysis: this liberates ligands that are detected by inflammasomes, such as lipopolysaccharide (LPS) that activates the non-canonical CASP4/CASP11 inflammasome or double-stranded DNA (dsDNA) that activates the AIM2 inflammasome. As an activator of NLRP3 inflammasome assembly: promotes selective NLRP3 inflammasome assembly in response to microbial and soluble, but not crystalline, agents. Independently of its GTPase activity, acts as an inhibitor of various viruses infectivity, such as HIV-1, Zika and influenza A viruses, by inhibiting FURIN-mediated maturation of viral envelope proteins. Antigenic tumor-specific truncated splice form. The sequence is that of Guanylate-binding protein 5 from Homo sapiens (Human).